The chain runs to 2217 residues: DNA polymerase epsilon catalytic subunit A (2217 aa).

Zn(2+) contacts are provided by Cys2104, Cys2107, Cys2126, and Cys2129. The CysA-type zinc finger occupies Cys2104–Cys2129. [4Fe-4S] cluster-binding residues include Cys2160, Cys2163, Cys2175, and Cys2177. Residues Cys2160 to Cys2177 carry the CysB motif motif.

It belongs to the DNA polymerase type-B family. In terms of assembly, heterotetramer. Consists of 4 subunits: POL2, DPB2, DPB3 and DPB4. Requires [4Fe-4S] cluster as cofactor.

The protein resides in the nucleus. The catalysed reaction is DNA(n) + a 2'-deoxyribonucleoside 5'-triphosphate = DNA(n+1) + diphosphate. In terms of biological role, DNA polymerase II participates in chromosomal DNA replication. In Candida glabrata (strain ATCC 2001 / BCRC 20586 / JCM 3761 / NBRC 0622 / NRRL Y-65 / CBS 138) (Yeast), this protein is DNA polymerase epsilon catalytic subunit A (POL2).